The following is a 208-amino-acid chain: Small ribosomal subunit protein uS3 (208 aa).

Residues 17-86 form the KH type-2 domain; the sequence is IDEYLEKELR…NPQIEVEEIK (70 aa).

This sequence belongs to the universal ribosomal protein uS3 family. In terms of assembly, part of the 30S ribosomal subunit.

In terms of biological role, binds the lower part of the 30S subunit head. The chain is Small ribosomal subunit protein uS3 from Thermococcus onnurineus (strain NA1).